The sequence spans 553 residues: Aminotransferase FUM8 (553 aa).

Residues 1–25 (MSPAPAILALRRVYNFCLLVDEAHG) form the signal peptide. N480 carries N-linked (GlcNAc...) asparagine glycosylation.

Belongs to the class-II pyridoxal-phosphate-dependent aminotransferase family. BioF subfamily. Pyridoxal 5'-phosphate is required as a cofactor.

It is found in the endoplasmic reticulum. It participates in mycotoxin biosynthesis. Its function is as follows. Aminotransferase; part of the gene cluster that mediates the biosynthesis of fumonisins B1 (FB1), B2 (FB2), B3 (FB3), and B4 (FB4), which are carcinogenic mycotoxins. Within the pathway, FUM8 catalyzes the release of the C-18 polyketide chain from the highly reducing polyketide synthase FUM1 by a nucleophilic attack of a carbanion, which is derived from R-carbon of alanine by decarboxylation, on the carbonyl carbon of polyketide acyl chain. The biosynthesis starts with the FUM1-catalyzed carbon chain assembly from one molecule of acetyl-CoA, eight molecules of malonyl-CoA, and two molecules of methionine (in S-adenosyl form). The C18 polyketide chain is released from the enzyme by a nucleophilic attack of a carbanion, which is derived from R-carbon of alanine by decarboxylation, on the carbonyl carbon of polyketide acyl chain. This step is catalyzed by the pyridoxal 5'-phosphate-dependent aminoacyl transferase FUM8. The resultant 3-keto intermediate is then stereospecifically reduced to a 3-hydroxyl product by reductase FUM13. Subsequent oxidations at C-10 by the cytochrome P450 monooxygenase FUM2, C-14 and C-15 by FUM6, FUM12 or FUM15, tricarballylic esterification of the hydroxyl groups on C-14 and C-15 by acyltransferase FUM14, and C-5 hydroxylation by 2-keto-glutarate-dependent dioxygenase FUM3 furnish the biosynthesis of fumonisins. The tricarballylic moieties are most likely derived from the citric acid cycle, and their addition to the carbon backbone may involve FUM7, FUM10, FUM11 and FUM14. In Gibberella moniliformis (strain M3125 / FGSC 7600) (Maize ear and stalk rot fungus), this protein is Aminotransferase FUM8.